The primary structure comprises 515 residues: 2,3-bisphosphoglycerate-independent phosphoglycerate mutase (515 aa).

Positions 17 and 67 each coordinate Mn(2+). Ser-67 serves as the catalytic Phosphoserine intermediate. Substrate contacts are provided by residues His-128, 157 to 158 (RD), Arg-190, Arg-196, 262 to 265 (RADR), and Lys-336. Residues Asp-403, His-407, Asp-444, His-445, and His-463 each contribute to the Mn(2+) site.

The protein belongs to the BPG-independent phosphoglycerate mutase family. Monomer. Mn(2+) is required as a cofactor.

It catalyses the reaction (2R)-2-phosphoglycerate = (2R)-3-phosphoglycerate. It functions in the pathway carbohydrate degradation; glycolysis; pyruvate from D-glyceraldehyde 3-phosphate: step 3/5. Its function is as follows. Catalyzes the interconversion of 2-phosphoglycerate and 3-phosphoglycerate. This Acinetobacter baylyi (strain ATCC 33305 / BD413 / ADP1) protein is 2,3-bisphosphoglycerate-independent phosphoglycerate mutase.